The chain runs to 119 residues: Protein TusC (119 aa).

The protein belongs to the DsrF/TusC family. As to quaternary structure, heterohexamer, formed by a dimer of trimers. The hexameric TusBCD complex contains 2 copies each of TusB, TusC and TusD. The TusBCD complex interacts with TusE.

Its subcellular location is the cytoplasm. Functionally, part of a sulfur-relay system required for 2-thiolation of 5-methylaminomethyl-2-thiouridine (mnm(5)s(2)U) at tRNA wobble positions. The polypeptide is Protein TusC (Cronobacter sakazakii (strain ATCC BAA-894) (Enterobacter sakazakii)).